A 169-amino-acid polypeptide reads, in one-letter code: DNA damage-inducible transcript 3 protein (169 aa).

The interval 10–18 is interaction with TRIB3; that stretch reads FGTLSSWEL. The tract at residues 10–26 is N-terminal; the sequence is FGTLSSWELEAWYEDLQ. Ser-14, Ser-15, Ser-30, and Ser-31 each carry phosphoserine; by CK2. Residues 32 to 139 form a disordered region; that stretch reads DENGGTYVSP…KVAQLAEENE (108 aa). Residues 74 to 89 show a composition bias toward low complexity; that stretch reads TSTSQSPHSPDSSQSS. Phosphoserine; by MAPK14 occurs at positions 79 and 82. Positions 99 to 162 constitute a bZIP domain; it reads QGRTRKRKQS…EATRRALIDR (64 aa). A basic motif region spans residues 101–130; it reads RTRKRKQSGHSPARAGKQRMKEKEQENERK. A compositionally biased stretch (basic and acidic residues) spans 119 to 139; the sequence is RMKEKEQENERKVAQLAEENE. Positions 134–148 are leucine-zipper; it reads LAEENERLKQEIERL.

This sequence belongs to the bZIP family. In terms of assembly, heterodimer. Interacts with TCF7L2/TCF4, EP300/P300, HDAC1, HDAC5 and HDAC6. Interacts with TRIB3 which blocks its association with EP300/P300. Interacts with FOXO3, CEBPB and ATF4. Interacts with isoform AltDDIT3 of DDIT3. Ubiquitinated, leading to its degradation by the proteasome. Post-translationally, phosphorylation at serine residues by MAPK14 enhances its transcriptional activation activity while phosphorylation at serine residues by CK2 inhibits its transcriptional activation activity.

The protein localises to the cytoplasm. The protein resides in the nucleus. In terms of biological role, multifunctional transcription factor in endoplasmic reticulum (ER) stress response. Plays an essential role in the response to a wide variety of cell stresses and induces cell cycle arrest and apoptosis in response to ER stress. Plays a dual role both as an inhibitor of CCAAT/enhancer-binding protein (C/EBP) function and as an activator of other genes. Acts as a dominant-negative regulator of C/EBP-induced transcription: dimerizes with members of the C/EBP family, impairs their association with C/EBP binding sites in the promoter regions, and inhibits the expression of C/EBP regulated genes. Positively regulates the transcription of TRIB3, IL6, IL8, IL23, TNFRSF10B/DR5, PPP1R15A/GADD34, BBC3/PUMA, BCL2L11/BIM and ERO1L. Negatively regulates; expression of BCL2 and MYOD1, ATF4-dependent transcriptional activation of asparagine synthetase (ASNS), CEBPA-dependent transcriptional activation of hepcidin (HAMP) and CEBPB-mediated expression of peroxisome proliferator-activated receptor gamma (PPARG). Together with ATF4, mediates ER-mediated cell death by promoting expression of genes involved in cellular amino acid metabolic processes, mRNA translation and the unfolded protein response (UPR) in response to ER stress. Inhibits the canonical Wnt signaling pathway by binding to TCF7L2/TCF4, impairing its DNA-binding properties and repressing its transcriptional activity. Plays a regulatory role in the inflammatory response through the induction of caspase-11 (CASP4/CASP11) which induces the activation of caspase-1 (CASP1) and both these caspases increase the activation of pro-IL1B to mature IL1B which is involved in the inflammatory response. Acts as a major regulator of postnatal neovascularization through regulation of endothelial nitric oxide synthase (NOS3)-related signaling. This Homo sapiens (Human) protein is DNA damage-inducible transcript 3 protein (DDIT3).